Reading from the N-terminus, the 442-residue chain is ATP-dependent protease ATPase subunit HslU (442 aa).

Residues I18 and 60-65 (GVGKTE) each bind ATP. A disordered region spans residues 137 to 156 (PKPKNDWESTETDSSSNTRQ). Residues D255, E320, and R392 each coordinate ATP.

This sequence belongs to the ClpX chaperone family. HslU subfamily. A double ring-shaped homohexamer of HslV is capped on each side by a ring-shaped HslU homohexamer. The assembly of the HslU/HslV complex is dependent on binding of ATP.

It is found in the cytoplasm. Its function is as follows. ATPase subunit of a proteasome-like degradation complex; this subunit has chaperone activity. The binding of ATP and its subsequent hydrolysis by HslU are essential for unfolding of protein substrates subsequently hydrolyzed by HslV. HslU recognizes the N-terminal part of its protein substrates and unfolds these before they are guided to HslV for hydrolysis. In Shewanella baltica (strain OS155 / ATCC BAA-1091), this protein is ATP-dependent protease ATPase subunit HslU.